A 196-amino-acid polypeptide reads, in one-letter code: MSSQIDAVILAGGMARRMGGDDKGLVELNGEAMIKHTIDRIKPQVKEILINANRNQTRYAEFGFKVISDEHTGFLGPLAGMITAMGQTDADYLLVVPCDCPLLPTDLVPRMLAAIKAEDAEIAVASDGEYEQPVVLLLKPSLRDSMKAFLEAGERKVDFWYAKHHFVVESFSDQPNAFVNVNTPEQKQRLAMEITK.

Residues 10-12, lysine 23, asparagine 51, aspartate 69, and aspartate 99 each bind GTP; that span reads LAG. Aspartate 99 serves as a coordination point for Mg(2+).

It belongs to the MobA family. As to quaternary structure, monomer. Requires Mg(2+) as cofactor.

Its subcellular location is the cytoplasm. It catalyses the reaction Mo-molybdopterin + GTP + H(+) = Mo-molybdopterin guanine dinucleotide + diphosphate. In terms of biological role, transfers a GMP moiety from GTP to Mo-molybdopterin (Mo-MPT) cofactor (Moco or molybdenum cofactor) to form Mo-molybdopterin guanine dinucleotide (Mo-MGD) cofactor. This chain is Molybdenum cofactor guanylyltransferase, found in Shewanella baltica (strain OS155 / ATCC BAA-1091).